The sequence spans 45 residues: NLR family pyrin domain-containing protein 2B (45 aa).

In terms of tissue distribution, expressed in all tissues tested, including spleen, lymph node, thymus, tonsil, peripheral blood leukocyte, bone marrow, liver, heart, brain, placenta, lung, skeletal muscle, kidney and pancreas.

Its subcellular location is the cytoplasm. It is found in the nucleus. In terms of biological role, may function as a negative regulator of NF-kappa-B by preventing RELA/p65 phosphorylation at 'Ser-536', thereby inhibiting its transcriptional activity. Through NF-kappa-B regulation may control cytokine release upon Toll-like receptors activation and therefore play a role in modulation of innate immunity. May also play a role in cell cycle progression and apoptotic process. This chain is NLR family pyrin domain-containing protein 2B, found in Homo sapiens (Human).